Here is a 148-residue protein sequence, read N- to C-terminus: Augurin (148 aa).

Residues 1 to 31 form the signal peptide; sequence MGTSSARPAVLALAGLALLLLLCLGPGDVSG. 2 consecutive propeptides follow at residues 32–68 and 133–148; these read NKLK…LKRA and SREG…YDDY.

This sequence belongs to the augurin family. As to expression, expressed in the brain, with expression in the choroid plexus and the ventricular ependymal cells (at protein level).

It is found in the secreted. It localises to the cytoplasm. The protein localises to the apical cell membrane. Functionally, probable hormone that may attenuate cell proliferation and induce senescence of oligodendrocyte and neural precursor cells in the central nervous system. ECRG4-induced senescence is characterized by G1 arrest, RB1 dephosphorylation and accelerated CCND1 and CCND3 proteasomal degradation. This chain is Augurin, found in Rattus norvegicus (Rat).